The primary structure comprises 480 residues: Phosphoglucosamine mutase (480 aa).

Residues 1-41 (MPKHTKKDPREGAPSATGEPQKQAAGRKLFGTDGVRGVANQ) form a disordered region. The Phosphoserine intermediate role is filled by serine 127. Mg(2+)-binding residues include serine 127, aspartate 269, aspartate 271, and aspartate 273. Serine 127 carries the post-translational modification Phosphoserine.

This sequence belongs to the phosphohexose mutase family. It depends on Mg(2+) as a cofactor. Post-translationally, activated by phosphorylation.

The enzyme catalyses alpha-D-glucosamine 1-phosphate = D-glucosamine 6-phosphate. Catalyzes the conversion of glucosamine-6-phosphate to glucosamine-1-phosphate. This is Phosphoglucosamine mutase from Sorangium cellulosum (strain So ce56) (Polyangium cellulosum (strain So ce56)).